The chain runs to 290 residues: Syntaxin-1A (290 aa).

The tract at residues 1-21 is disordered; the sequence is MTKDRLAALQAAQSDDEDMPE. The Cytoplasmic segment spans residues 1 to 267; sequence MTKDRLAALQ…KYQSKARRKK (267 aa). Residues 194–256 form the t-SNARE coiled-coil homology domain; it reads LADIEARHAD…QTATQDTKKA (63 aa). A helical; Anchor for type IV membrane protein membrane pass occupies residues 268 to 289; sequence IWIAICVLIAIIILVVFLAIYL. Thr290 is a topological domain (vesicular).

This sequence belongs to the syntaxin family. Post-translationally, (Microbial infection) Targeted and hydrolyzed by the light chain (LC) of P.bifermentans PMP1. Cleavage probably inhibits neurotransmitter release.

It localises to the cytoplasmic vesicle. It is found in the secretory vesicle. Its subcellular location is the synaptic vesicle membrane. Its function is as follows. Plays a critical role in several secretory processes. The polypeptide is Syntaxin-1A (Anopheles gambiae (African malaria mosquito)).